The primary structure comprises 468 residues: Peroxisome proliferator-activated receptor alpha (468 aa).

The segment at residues 99 to 173 is a DNA-binding region (nuclear receptor); it reads NIECRICGDK…VGMSHNAIRF (75 aa). NR C4-type zinc fingers lie at residues 102 to 122 and 139 to 161; these read CRIC…CEGC and CDRS…FHKC. Residues 239–466 enclose the NR LBD domain; the sequence is FVIHDMETLC…HPLLQEIYRD (228 aa). The tract at residues 304–433 is required for heterodimerization with RXRA; sequence DQVTLLKYGV…PKLLQKMVDL (130 aa).

This sequence belongs to the nuclear hormone receptor family. NR1 subfamily. As to quaternary structure, heterodimer; with RXRA. This heterodimerization is required for DNA binding and transactivation activity. Interacts with NCOA3 coactivator. Interacts with CITED2; the interaction stimulates its transcriptional activity. Also interacts with PPARBP in vitro. Interacts with AKAP13, LPIN1, PRDM16 and coactivator NCOA6. Interacts with ASXL1 and ASXL2. Interacts with PER2. Interacts with SIRT1; the interaction seems to be modulated by NAD(+) levels. Interacts with CRY1 and CRY2. In hepatocytes, interacts with PAQR3 and HUWE1; the interactions promote PPARA poylubiquitination and HUWE1-mediated degradation. Post-translationally, ubiquitinated by E3 ubiquitin-protein ligase HUWE1; leading to proteasomal degradation. Phosphorylated. In terms of tissue distribution, highly expressed in liver, kidney and heart. Very weakly expressed in brain and testis.

The protein resides in the nucleus. In terms of biological role, ligand-activated transcription factor. Key regulator of lipid metabolism. Activated by the endogenous ligand 1-palmitoyl-2-oleoyl-sn-glycerol-3-phosphocholine (16:0/18:1-GPC). Activated by oleylethanolamide, a naturally occurring lipid that regulates satiety. Receptor for peroxisome proliferators such as hypolipidemic drugs and fatty acids. Regulates the peroxisomal beta-oxidation pathway of fatty acids. Functions as a transcription activator for the ACOX1 and P450 genes. Transactivation activity requires heterodimerization with RXRA and is antagonized by NR2C2. May be required for the propagation of clock information to metabolic pathways regulated by PER2. This chain is Peroxisome proliferator-activated receptor alpha (Ppara), found in Mus musculus (Mouse).